A 207-amino-acid chain; its full sequence is Ribosome maturation factor RimM (207 aa).

Positions Asp114–Tyr207 constitute a PRC barrel domain.

It belongs to the RimM family. In terms of assembly, binds ribosomal protein uS19.

The protein resides in the cytoplasm. Its function is as follows. An accessory protein needed during the final step in the assembly of 30S ribosomal subunit, possibly for assembly of the head region. Essential for efficient processing of 16S rRNA. May be needed both before and after RbfA during the maturation of 16S rRNA. It has affinity for free ribosomal 30S subunits but not for 70S ribosomes. This is Ribosome maturation factor RimM from Bordetella pertussis (strain Tohama I / ATCC BAA-589 / NCTC 13251).